The following is a 915-amino-acid chain: Protein translocase subunit SecA (915 aa).

ATP contacts are provided by residues glutamine 87, 105–109, and aspartate 512; that span reads GEGKT. Residues 849 to 864 are compositionally biased toward low complexity; sequence AAQQQARQAPLPNAPA. The segment at 849–915 is disordered; that stretch reads AAQQQARQAP…CHGSRAKDHA (67 aa). Over residues 876–891 the composition is skewed to basic and acidic residues; the sequence is PEEKVARVAAERHIGR. Residues cysteine 895, cysteine 897, cysteine 906, and histidine 907 each coordinate Zn(2+).

This sequence belongs to the SecA family. In terms of assembly, monomer and homodimer. Part of the essential Sec protein translocation apparatus which comprises SecA, SecYEG and auxiliary proteins SecDF-YajC and YidC. Zn(2+) serves as cofactor.

It is found in the cell inner membrane. Its subcellular location is the cytoplasm. The enzyme catalyses ATP + H2O + cellular proteinSide 1 = ADP + phosphate + cellular proteinSide 2.. Its function is as follows. Part of the Sec protein translocase complex. Interacts with the SecYEG preprotein conducting channel. Has a central role in coupling the hydrolysis of ATP to the transfer of proteins into and across the cell membrane, serving both as a receptor for the preprotein-SecB complex and as an ATP-driven molecular motor driving the stepwise translocation of polypeptide chains across the membrane. The protein is Protein translocase subunit SecA of Actinobacillus succinogenes (strain ATCC 55618 / DSM 22257 / CCUG 43843 / 130Z).